Here is a 213-residue protein sequence, read N- to C-terminus: Peptidyl-tRNA hydrolase (213 aa).

Tyr15 lines the tRNA pocket. His20 (proton acceptor) is an active-site residue. 3 residues coordinate tRNA: Tyr66, Asn68, and Asn114. The segment at 186 to 213 is disordered; it reads MHAKPPRPKPPRPVTAPGAPVPPTEPSA. Over residues 196 to 213 the composition is skewed to pro residues; it reads PRPVTAPGAPVPPTEPSA.

Belongs to the PTH family. Monomer.

Its subcellular location is the cytoplasm. The catalysed reaction is an N-acyl-L-alpha-aminoacyl-tRNA + H2O = an N-acyl-L-amino acid + a tRNA + H(+). Hydrolyzes ribosome-free peptidyl-tRNAs (with 1 or more amino acids incorporated), which drop off the ribosome during protein synthesis, or as a result of ribosome stalling. Functionally, catalyzes the release of premature peptidyl moieties from peptidyl-tRNA molecules trapped in stalled 50S ribosomal subunits, and thus maintains levels of free tRNAs and 50S ribosomes. This Leptothrix cholodnii (strain ATCC 51168 / LMG 8142 / SP-6) (Leptothrix discophora (strain SP-6)) protein is Peptidyl-tRNA hydrolase.